The chain runs to 567 residues: Protein phosphatase 1 regulatory inhibitor subunit 16B (567 aa).

The stretch at Glu15–Arg55 forms a coiled coil. Ser69 is subject to Phosphoserine. 4 ANK repeats span residues Asp100 to Ala129, Glu133 to Ala162, Gln228 to Val257, and Asp261 to Ala290. A phosphoserine mark is found at Ser333, Ser337, and Ser350. Positions Arg378–Glu403 are disordered. Residues Asp385–Glu403 are compositionally biased toward basic and acidic residues. At Ser476 the chain carries Phosphoserine. The span at Ser504–Glu515 shows a compositional bias: polar residues. A disordered region spans residues Ser504–Thr525. The ANK 5 repeat unit spans residues Ser530 to Lys559. The S-palmitoyl cysteine moiety is linked to residue Cys563. At Cys564 the chain carries Cysteine methyl ester. A lipid anchor (S-farnesyl cysteine) is attached at Cys564. Residues Arg565–Ser567 constitute a propeptide, removed in mature form.

In terms of assembly, interacts with PPP1CA, PPP1CB and MSN. Interacts (via its fourth ankyrin repeat) with the mature dimeric form of RPSA/LAMR1. Interacts with EEF1A1. Interacts with PTEN. Interacts with ECE1. Post-translationally, phosphorylated by PKA and, after PKA priming, by GSK3B. Phosphorylation by GSK3B reduces its association with PP1C and enhances PP1C activity. Dephosphorylation by its associated PP1C results in enhanced association with PP1C, but reduced PP1C activity.

Its subcellular location is the cell membrane. It is found in the nucleus. The protein localises to the cell projection. In terms of biological role, regulator of protein phosphatase 1 (PP1) that acts as a positive regulator of pulmonary endothelial cell (EC) barrier function. Involved in the regulation of the PI3K/AKT signaling pathway, angiogenesis and endothelial cell proliferation. Regulates angiogenesis and endothelial cell proliferation through the control of ECE1 dephosphorylation, trafficking and activity. Protects the endothelial barrier from lipopolysaccharide (LPS)-induced vascular leakage. Involved in the regulation of endothelial cell filopodia extension. May be a downstream target for TGF-beta1 signaling cascade in endothelial cells. Involved in PKA-mediated moesin dephosphorylation which is important in EC barrier protection against thrombin stimulation. Promotes the interaction of PPP1CA with RPSA/LAMR1 and in turn facilitates the dephosphorylation of RPSA/LAMR1. Involved in the dephosphorylation of EEF1A1. This Homo sapiens (Human) protein is Protein phosphatase 1 regulatory inhibitor subunit 16B (PPP1R16B).